Consider the following 254-residue polypeptide: rRNA N-glycosylase sapovaccarin-S2 (254 aa).

This sequence belongs to the ribosome-inactivating protein family. Type 1 RIP subfamily. Expressed in seeds; most abundant in the perisperm.

The catalysed reaction is Endohydrolysis of the N-glycosidic bond at one specific adenosine on the 28S rRNA.. In terms of biological role, exhibits N-glycosylase activity. Catalyzes the release of one adenine from a ribosome. Acts as a ribosome-inactivating protein and inhibits protein synthesis. Induces cell death in Huh-7 liver cells. May contribute to the protection against plant pests and predators or play a role in regulating the death of plant cells. The chain is rRNA N-glycosylase sapovaccarin-S2 from Gypsophila vaccaria (Cow soapwort).